The following is a 1256-amino-acid chain: Muramidase-released protein (1256 aa).

An N-terminal signal peptide occupies residues 1 to 47 (MRRSNKKSFDWYGTKQQFSIRKYHFGAASVLLGVSLVLGAGAQVVKA). Small repeat units lie at residues 663-681 (KTTGTVVAGTTTVKYVYEK) and 839-861 (KTDGEENGKVIEGTITVTYVYQK). Disordered stretches follow at residues 873–949 (PETD…VDTP), 967–994 (GNPIAPQEEGTKPNKSIPGYEFTGKTVT), and 1028–1049 (KEPVTDTPTSPEGTPYDTTDNK). The Large repeat unit spans residues 953–1006 (VPVKKVVTNHVDEEGNPIAPQEEGTKPNKSIPGYEFTGKTVTDEDGNTTHIYKK). The segment covering 1033 to 1045 (DTPTSPEGTPYDT) has biased composition (polar residues). The stretch at 1064–1084 (RVDGTENGKVVEGETVVTYVY) is one Small repeat. Large repeat units follow at residues 1089-1142 (TPAK…IYKK) and 1143-1195 (TPAK…IYRK). Residues 1102–1137 (EGNPVAPQEEGTKPNKSIPGYEFTGKTVTDEDGNTT) are disordered. Residues 1196–1229 (LSNKPTTPEKETPAKPQAGKTASGKAQLPNTGEA) form a disordered region. Residues 1223–1227 (LPNTG) carry the LPXTG sorting signal motif. The residue at position 1226 (Thr-1226) is a Pentaglycyl murein peptidoglycan amidated threonine. A propeptide spans 1227–1256 (GEASSVAGALGTAMLVATLAFARKRRRNED) (removed by sortase).

The protein resides in the secreted. It is found in the cell wall. This chain is Muramidase-released protein (mrp), found in Streptococcus suis.